Here is an 826-residue protein sequence, read N- to C-terminus: Protein FAM171B (826 aa).

An N-terminal signal peptide occupies residues 1 to 32 (MARLCRRVPCTLLLGLAVVLLKARLVPAAARA). The Extracellular portion of the chain corresponds to 33-353 (ELSRSDLSLI…DSKDITAYHT (321 aa)). A disordered region spans residues 52–71 (QQQQQKQLEEAEEERTEVPG). Asn108, Asn113, Asn213, and Asn268 each carry an N-linked (GlcNAc...) asparagine glycan. A helical membrane pass occupies residues 354–374 (VFLTAILGGTIVIVIGFFAVL). Topologically, residues 375–826 (LCYCRDKCGT…REERPLIPIN (452 aa)) are cytoplasmic. 3 disordered regions span residues 429–448 (NAKN…AETE), 474–493 (QNNY…GSKQ), and 774–826 (HPGE…IPIN). Residues 438 to 448 (QKKEPSKAETE) show a composition bias toward basic and acidic residues. Residues 474 to 486 (QNNYSRNPTQSLE) show a composition bias toward polar residues. The span at 774–786 (HPGEESPGRKSTV) shows a compositional bias: basic and acidic residues. Ser794 is modified (phosphoserine). Residues 805–826 (AKRDSKTNIWKKREERPLIPIN) are compositionally biased toward basic and acidic residues.

Belongs to the FAM171 family.

The protein resides in the cytoplasmic granule. It localises to the membrane. This is Protein FAM171B (FAM171B) from Homo sapiens (Human).